Reading from the N-terminus, the 137-residue chain is 6,7-dimethyl-8-ribityllumazine synthase (137 aa).

Residues Phe-11, 43–45 (SFD), and 67–69 (CVI) contribute to the 5-amino-6-(D-ribitylamino)uracil site. 72-73 (DT) serves as a coordination point for (2S)-2-hydroxy-3-oxobutyl phosphate. The active-site Proton donor is His-75. Position 100 (Leu-100) interacts with 5-amino-6-(D-ribitylamino)uracil. Arg-115 lines the (2S)-2-hydroxy-3-oxobutyl phosphate pocket.

Belongs to the DMRL synthase family. As to quaternary structure, forms an icosahedral capsid composed of 60 subunits, arranged as a dodecamer of pentamers.

It carries out the reaction (2S)-2-hydroxy-3-oxobutyl phosphate + 5-amino-6-(D-ribitylamino)uracil = 6,7-dimethyl-8-(1-D-ribityl)lumazine + phosphate + 2 H2O + H(+). Its pathway is cofactor biosynthesis; riboflavin biosynthesis; riboflavin from 2-hydroxy-3-oxobutyl phosphate and 5-amino-6-(D-ribitylamino)uracil: step 1/2. Catalyzes the formation of 6,7-dimethyl-8-ribityllumazine by condensation of 5-amino-6-(D-ribitylamino)uracil with 3,4-dihydroxy-2-butanone 4-phosphate. This is the penultimate step in the biosynthesis of riboflavin. The sequence is that of 6,7-dimethyl-8-ribityllumazine synthase from Methanococcus maripaludis (strain DSM 14266 / JCM 13030 / NBRC 101832 / S2 / LL).